A 165-amino-acid chain; its full sequence is Crossover junction endodeoxyribonuclease RuvC (165 aa).

Residues D6, E67, and D142 contribute to the active site. 3 residues coordinate Mg(2+): D6, E67, and D142.

This sequence belongs to the RuvC family. As to quaternary structure, homodimer which binds Holliday junction (HJ) DNA. The HJ becomes 2-fold symmetrical on binding to RuvC with unstacked arms; it has a different conformation from HJ DNA in complex with RuvA. In the full resolvosome a probable DNA-RuvA(4)-RuvB(12)-RuvC(2) complex forms which resolves the HJ. The cofactor is Mg(2+).

It localises to the cytoplasm. The enzyme catalyses Endonucleolytic cleavage at a junction such as a reciprocal single-stranded crossover between two homologous DNA duplexes (Holliday junction).. Functionally, the RuvA-RuvB-RuvC complex processes Holliday junction (HJ) DNA during genetic recombination and DNA repair. Endonuclease that resolves HJ intermediates. Cleaves cruciform DNA by making single-stranded nicks across the HJ at symmetrical positions within the homologous arms, yielding a 5'-phosphate and a 3'-hydroxyl group; requires a central core of homology in the junction. The consensus cleavage sequence is 5'-(A/T)TT(C/G)-3'. Cleavage occurs on the 3'-side of the TT dinucleotide at the point of strand exchange. HJ branch migration catalyzed by RuvA-RuvB allows RuvC to scan DNA until it finds its consensus sequence, where it cleaves and resolves the cruciform DNA. In Chlamydia abortus (strain DSM 27085 / S26/3) (Chlamydophila abortus), this protein is Crossover junction endodeoxyribonuclease RuvC.